The following is a 433-amino-acid chain: DNA polymerase processivity factor (433 aa).

Positions arginine 274–glycine 433 are disordered. 3 stretches are compositionally biased toward gly residues: residues serine 289 to serine 298, glycine 325 to glycine 336, and glycine 344 to glycine 359. The span at glycine 360–lysine 376 shows a compositional bias: basic and acidic residues. Over residues glycine 385–leucine 398 the composition is skewed to gly residues. Lysine 410 is covalently cross-linked (Glycyl lysine isopeptide (Lys-Gly) (interchain with G-Cter in host SUMO1)). 3 positions are modified to phosphoserine: serine 413, serine 415, and serine 418.

This sequence belongs to the herpesviridae polymerase accessory protein family. Forms homodimers. Interacts with host SMARCB1. Interacts with host NCL/nucleolin; this interaction is important for the organization of proteins within viral replication compartments. Interacts with UL112/UL113; this interaction is necessary for efficient viral DNA replication. Interacts with UL84. Interacts with the uracil DNA glycosylase UL114. Interacts with the DNA polymerase catalytic subunit UL54. Interacts with host IRF3. Interacts with host RELA. Post-translationally, phosphorylated by UL97 on serine residues, phosphorylation seems important for UL44 nuclear entry but does not directly affect its role in replication. Sumoylated. Sumoylation on Lys-410 increases viral DNA replication.

The protein localises to the virion. It localises to the host nucleus. Accessory subunit of the DNA polymerase that plays an essential role in viral DNA replication and acts by increasing the processivity of polymerization. Forms dimers that binds to double-stranded DNA and UL54 specifically to stimulates long chain DNA synthesis efficiently. Plays an important role in maintaining the structure of viral replication compartments by interacting with host nucleolin/NUC. In addition, suppresses innate immune responses through effects on host IRF3 and NF-kappa-B. Mechanistically, interfere with the binding of IRF3 and the p65 NF-kappa-B subunit to the promoters of antiviral genes, thereby inhibiting the expression of these genes. The chain is DNA polymerase processivity factor (UL44) from Homo sapiens (Human).